A 236-amino-acid chain; its full sequence is Small ribosomal subunit protein uS2c (236 aa).

This sequence belongs to the universal ribosomal protein uS2 family.

It localises to the plastid. Its subcellular location is the chloroplast. The sequence is that of Small ribosomal subunit protein uS2c (rps2) from Gossypium barbadense (Sea Island cotton).